A 689-amino-acid chain; its full sequence is Glycine--tRNA ligase beta subunit (689 aa).

This sequence belongs to the class-II aminoacyl-tRNA synthetase family. Tetramer of two alpha and two beta subunits.

It is found in the cytoplasm. It catalyses the reaction tRNA(Gly) + glycine + ATP = glycyl-tRNA(Gly) + AMP + diphosphate. The chain is Glycine--tRNA ligase beta subunit from Salmonella schwarzengrund (strain CVM19633).